A 346-amino-acid polypeptide reads, in one-letter code: Biotin synthase (346 aa).

A Radical SAM core domain is found at 36–265 (YFGRQVMLHR…KAEIRIGGGR (230 aa)). The [4Fe-4S] cluster site is built by Cys54, Cys58, and Cys61. Positions 98, 130, 190, and 260 each coordinate [2Fe-2S] cluster.

The protein belongs to the radical SAM superfamily. Biotin synthase family. In terms of assembly, homodimer. Requires [4Fe-4S] cluster as cofactor. It depends on [2Fe-2S] cluster as a cofactor.

It catalyses the reaction (4R,5S)-dethiobiotin + (sulfur carrier)-SH + 2 reduced [2Fe-2S]-[ferredoxin] + 2 S-adenosyl-L-methionine = (sulfur carrier)-H + biotin + 2 5'-deoxyadenosine + 2 L-methionine + 2 oxidized [2Fe-2S]-[ferredoxin]. Its pathway is cofactor biosynthesis; biotin biosynthesis; biotin from 7,8-diaminononanoate: step 2/2. Catalyzes the conversion of dethiobiotin (DTB) to biotin by the insertion of a sulfur atom into dethiobiotin via a radical-based mechanism. This chain is Biotin synthase, found in Acaryochloris marina (strain MBIC 11017).